Reading from the N-terminus, the 509-residue chain is FAD-linked oxidoreductase dpmaF (509 aa).

The first 21 residues, 1–21, serve as a signal peptide directing secretion; sequence MTRLSLQLIAGLAGQAWLVNS. Residues 59–231 enclose the FAD-binding PCMH-type domain; the sequence is LQYEPIAVAV…AEYGFETFPA (173 aa). Residues N125, N193, and N281 are each glycosylated (N-linked (GlcNAc...) asparagine).

Belongs to the oxygen-dependent FAD-linked oxidoreductase family. FAD is required as a cofactor.

Its pathway is secondary metabolite biosynthesis; terpenoid biosynthesis. FAD-linked oxidoreductase; part of the gene cluster that mediates the biosynthesis of the diterpenoid pyrones subglutinols A and B. The first step of the pathway is the synthesis of the alpha-pyrone moiety by the polyketide synthase dpmaA via condensation of one acetyl-CoA starter unit with 3 malonyl-CoA units and 2 methylations. The alpha-pyrone is then combined with geranylgeranyl pyrophosphate (GGPP) formed by the GGPP synthase dpmaD through the action of the prenyltransferase dpmaC to yield a linear alpha-pyrone diterpenoid. Subsequent steps in the diterpenoid pyrone biosynthetic pathway involve the decalin core formation, which is initiated by the epoxidation of the C10-C11 olefin by the FAD-dependent oxidoreductase dpmaE, and is followed by a cyclization cascade catalyzed by the terpene cyclase dpmaB. The dehydrogenase dpmaF is then involved in tetrahydrofuran (THF) ring formation at the C5 unit to complete the formation of subglutinols A and B. In Metarhizium anisopliae (Entomophthora anisopliae), this protein is FAD-linked oxidoreductase dpmaF.